Reading from the N-terminus, the 247-residue chain is Transcription factor bHLH92 (247 aa).

One can recognise a bHLH domain in the interval 85–134; that stretch reads ERSRRHMLKERTRREKQKQSYLALHSLLPFATKNDKNSIVEKAVDEIAKL.

Homodimer.

The protein resides in the nucleus. The sequence is that of Transcription factor bHLH92 (BHLH92) from Arabidopsis thaliana (Mouse-ear cress).